Here is a 308-residue protein sequence, read N- to C-terminus: UDP-3-O-acyl-N-acetylglucosamine deacetylase (308 aa).

Zn(2+) contacts are provided by His77, His233, and Asp237. His260 acts as the Proton donor in catalysis.

The protein belongs to the LpxC family. Requires Zn(2+) as cofactor.

The enzyme catalyses a UDP-3-O-[(3R)-3-hydroxyacyl]-N-acetyl-alpha-D-glucosamine + H2O = a UDP-3-O-[(3R)-3-hydroxyacyl]-alpha-D-glucosamine + acetate. The protein operates within glycolipid biosynthesis; lipid IV(A) biosynthesis; lipid IV(A) from (3R)-3-hydroxytetradecanoyl-[acyl-carrier-protein] and UDP-N-acetyl-alpha-D-glucosamine: step 2/6. Functionally, catalyzes the hydrolysis of UDP-3-O-myristoyl-N-acetylglucosamine to form UDP-3-O-myristoylglucosamine and acetate, the committed step in lipid A biosynthesis. This Nitratidesulfovibrio vulgaris (strain ATCC 29579 / DSM 644 / CCUG 34227 / NCIMB 8303 / VKM B-1760 / Hildenborough) (Desulfovibrio vulgaris) protein is UDP-3-O-acyl-N-acetylglucosamine deacetylase.